The following is a 247-amino-acid chain: Killer cell lectin-like receptor subfamily I member 2 (247 aa).

Over residues 1 to 12 the composition is skewed to basic and acidic residues; the sequence is MPRKKQNERGTN. The disordered stretch occupies residues 1–39; the sequence is MPRKKQNERGTNKQEIINIETKSSTFQEKQRQSKTDQIS. The Cytoplasmic portion of the chain corresponds to 1–79; it reads MPRKKQNERG…GTDPWLTTWR (79 aa). The chain crosses the membrane as a helical span at residues 80 to 100; the sequence is IITVILGTSCIILVTKVGFLI. Residues 101 to 247 lie on the Extracellular side of the membrane; that stretch reads PNLFSRGEKR…KAYTCEFNLQ (147 aa). N-linked (GlcNAc...) asparagine glycosylation is found at Asn125, Asn196, Asn212, and Asn218. Residues 139 to 243 form the C-type lectin domain; the sequence is FGNNFYLFFR…CSSKKAYTCE (105 aa). 2 disulfides stabilise this stretch: Cys160–Cys242 and Cys221–Cys234.

As to quaternary structure, heterodimer with KLRE1. In terms of tissue distribution, expressed in natural killer (NK) cells.

It localises to the cell membrane. Lectin-like receptor for natural killer (NK) cells. Heterodimer formation with KLRE1 mediates NK cell cytolytic activity. The polypeptide is Killer cell lectin-like receptor subfamily I member 2 (Rattus norvegicus (Rat)).